The following is a 210-amino-acid chain: Large ribosomal subunit protein uL3 (210 aa).

Residues 125-151 are disordered; it reads RHGQSRGPMSHGSRYHRRPGSMGPVAP.

This sequence belongs to the universal ribosomal protein uL3 family. Part of the 50S ribosomal subunit. Forms a cluster with proteins L14 and L19.

In terms of biological role, one of the primary rRNA binding proteins, it binds directly near the 3'-end of the 23S rRNA, where it nucleates assembly of the 50S subunit. This chain is Large ribosomal subunit protein uL3, found in Bacillus cereus (strain ATCC 14579 / DSM 31 / CCUG 7414 / JCM 2152 / NBRC 15305 / NCIMB 9373 / NCTC 2599 / NRRL B-3711).